The following is a 315-amino-acid chain: tRNA uridine(34) hydroxylase (315 aa).

The Rhodanese domain maps to 145-235 (MKNDFILVDM…GIIEYVNFIK (91 aa)). Catalysis depends on C199, which acts as the Cysteine persulfide intermediate.

The protein belongs to the TrhO family.

The enzyme catalyses uridine(34) in tRNA + AH2 + O2 = 5-hydroxyuridine(34) in tRNA + A + H2O. Catalyzes oxygen-dependent 5-hydroxyuridine (ho5U) modification at position 34 in tRNAs. The protein is tRNA uridine(34) hydroxylase of Wigglesworthia glossinidia brevipalpis.